The primary structure comprises 210 residues: Na(+)-translocating NADH-quinone reductase subunit D (210 aa).

The next 6 membrane-spanning stretches (helical) occupy residues 14–34, 42–62, 72–92, 103–123, 131–151, and 178–198; these read PIVSNNPIALQVLGVCSALAV, LVMTIALTAVCACSNLFISML, IIVQMTIIASLVIVVDQVLQA, VFVGLIITNCIVMGRAEAYAM, FMDGIGNGLGYGAILLSVGFV, and NGLLLLPPSAFFLIGTLIWII.

This sequence belongs to the NqrDE/RnfAE family. As to quaternary structure, composed of six subunits; NqrA, NqrB, NqrC, NqrD, NqrE and NqrF.

The protein localises to the cell inner membrane. The enzyme catalyses a ubiquinone + n Na(+)(in) + NADH + H(+) = a ubiquinol + n Na(+)(out) + NAD(+). In terms of biological role, NQR complex catalyzes the reduction of ubiquinone-1 to ubiquinol by two successive reactions, coupled with the transport of Na(+) ions from the cytoplasm to the periplasm. NqrA to NqrE are probably involved in the second step, the conversion of ubisemiquinone to ubiquinol. This is Na(+)-translocating NADH-quinone reductase subunit D from Shewanella woodyi (strain ATCC 51908 / MS32).